Reading from the N-terminus, the 161-residue chain is Protein UXT homolog (161 aa).

The protein belongs to the UXT family.

This Dictyostelium discoideum (Social amoeba) protein is Protein UXT homolog.